The chain runs to 275 residues: MEEVREGHALGGGMEADGPASLQELPPSPRSPSPPPSPPPLPSPPSLPSPAAPEAPELPEPAQPSEAHARQLLLEEWGPLSGGLELPQRLTWKLLLLRRPLYRNLLRSPNPEGINIYEPAPPTGPTQRPLETLGNFRGWYIRTEKLQQNQSWTVKQQCVDLLAEGLWEELLDDEQPAITVMDWFEDSRLDACVYELHVWLLAADRRTVIAQHHVAPRTSGRGPPGRWVQVSHVFRHYGPGVRFIHFLHKAKNRMEPGGLRRTRVTDSSVSVQLRE.

Residues 1 to 67 (MEEVREGHAL…LPEPAQPSEA (67 aa)) are disordered. Pro residues predominate over residues 26 to 62 (PPSPRSPSPPPSPPPLPSPPSLPSPAAPEAPELPEPA). Residues Ser31, Ser37, and Ser49 each carry the phosphoserine modification. The FBA domain maps to 95–273 (LLLRRPLYRN…VTDSSVSVQL (179 aa)).

As to expression, expressed in the esophagus, oral cavity, skin, tongue and reproductive organs.

It is found in the cytoplasm. In terms of biological role, promotes cell proliferation. The chain is F-box only protein 50 (NCCRP1) from Homo sapiens (Human).